Reading from the N-terminus, the 329-residue chain is Porphobilinogen deaminase (329 aa).

S-(dipyrrolylmethanemethyl)cysteine is present on cysteine 250.

The protein belongs to the HMBS family. In terms of assembly, monomer. Dipyrromethane serves as cofactor.

It carries out the reaction 4 porphobilinogen + H2O = hydroxymethylbilane + 4 NH4(+). It participates in porphyrin-containing compound metabolism; protoporphyrin-IX biosynthesis; coproporphyrinogen-III from 5-aminolevulinate: step 2/4. In terms of biological role, tetrapolymerization of the monopyrrole PBG into the hydroxymethylbilane pre-uroporphyrinogen in several discrete steps. The sequence is that of Porphobilinogen deaminase from Burkholderia pseudomallei (strain 668).